The primary structure comprises 392 residues: DNA replication and repair protein RecF (392 aa).

Residue Gly30–Thr37 participates in ATP binding.

Belongs to the RecF family.

The protein localises to the cytoplasm. Functionally, the RecF protein is involved in DNA metabolism; it is required for DNA replication and normal SOS inducibility. RecF binds preferentially to single-stranded, linear DNA. It also seems to bind ATP. The chain is DNA replication and repair protein RecF from Chloroflexus aurantiacus (strain ATCC 29364 / DSM 637 / Y-400-fl).